Consider the following 143-residue polypeptide: Ninjurin-2 (143 aa).

The Extracellular segment spans residues 1-61 (MESDRETIHL…KSVLQQGPFA (61 aa)). Positions 26-38 (NFYATKKSVAESM) are helix alpha1. Positions 39 to 58 (LDVALFMSNAMRLKSVLQQG) are helix alpha2. A helical membrane pass occupies residues 62 to 93 (EYYTTLVTLIIVSLLLQVVISLLLVFIAILNL). Residues 94 to 97 (NEVE) are Cytoplasmic-facing. Residues 98–127 (NQRHLNKLNNAATILVFITVVINIFITAFG) form a helical membrane-spanning segment. Cholesterol is bound at residue lysine 104. Over 128–143 (AHHAASMAARTSSNPI) the chain is Extracellular.

Belongs to the ninjurin family. Homooligomer; in response to stimuli, homooligomerizes into filaments. In contrast to NINJ1, the filament is curved toward the intracellular space, preventing its circularization on a relatively flat membrane to mediate plasma membrane rupture: curvature is caused by cholesterol-binding at the cytoplasmic leaflet.

It localises to the cell membrane. In terms of biological role, its role in unclear. In contrast to NINJ1 paralog, does not mediate plasma membrane rupture (cytolysis) downstream of necroptotic and pyroptotic programmed cell death. While it is able to oligomerize and form filaments, filaments are curved toward the intracellular space, preventing circularization to mediate plasma membrane rupture. May act as a homophilic transmembrane adhesion molecule involved in nerve regeneration. Promotes axonal growth. The polypeptide is Ninjurin-2 (Ninj2) (Mus musculus (Mouse)).